The sequence spans 229 residues: PKHD-type hydroxylase Rpal_3968 (229 aa).

Residues 78–180 (QIFPPLFNRY…RVASFFWLQS (103 aa)) enclose the Fe2OG dioxygenase domain. His-98, Asp-100, and His-161 together coordinate Fe cation. Arg-171 contributes to the 2-oxoglutarate binding site.

Fe(2+) is required as a cofactor. L-ascorbate serves as cofactor.

This Rhodopseudomonas palustris (strain TIE-1) protein is PKHD-type hydroxylase Rpal_3968.